Here is a 658-residue protein sequence, read N- to C-terminus: DNA-binding protein Rfx5 (658 aa).

The span at 1–10 (MAEDKPDAKS) shows a compositional bias: basic and acidic residues. A disordered region spans residues 1-28 (MAEDKPDAKSPKTGARPQGGADAGEPTT). N-acetylalanine is present on alanine 2. Serine 10 is subject to Phosphoserine. Residues 24 to 89 (GEPTTLLQRL…PSLLSNEEYM (66 aa)) are N-terminal domain. Residues 61 to 65 (LYLYL) are leucine-rich region; critical for dimer formation and for interaction with RFXAP. A DNA-binding region (RFX-type winged-helix) is located at residues 91-167 (AYRWIRNHLE…YCYSGIRRKT (77 aa)). The PxLPxI/L motif; mediates interaction with RFXANK signature appears at 172-177 (PPLPGL). At serine 184 the chain carries Phosphoserine. Disordered stretches follow at residues 250–315 (LAEE…SSVP), 382–422 (AGPG…GLGA), 443–602 (VPPR…DKIP), and 624–658 (KGEADAATQGNKGLKGRVLQSSLTPEHKDPKATPP). A compositionally biased stretch (basic and acidic residues) spans 277 to 309 (GPKKPERPAQPPKEQEARAGTDLPGRAERKKSV). Gly residues-rich tracts occupy residues 382 to 398 (AGPGPGPGLGPRFGPGP) and 406 to 422 (PGLGAGLGPGLGPGLGA). Basic and acidic residues-rich tracts occupy residues 465 to 476 (PRPHDKGIKRTA) and 489 to 498 (PVKEMKHETQ). The segment covering 506–516 (KRKRGRPRKKP) has biased composition (basic residues). Basic and acidic residues predominate over residues 648–658 (PEHKDPKATPP).

This sequence belongs to the RFX family. Homodimer. The RFX heterotetrameric complex consists of 2 molecules of RFX5 and one each of RFXAP and RFX-B/RFXANK; with each subunit representing a separate complementation group. Interacts (via PxLPxI/L motif) with RFXANK (via ankyrin repeats); the interaction is direct. RFX forms cooperative DNA binding complexes with X2BP and CBF/NF-Y. RFX associates with CIITA to form an active transcriptional complex. Post-translationally, phosphorylated.

It localises to the nucleus. Its function is as follows. Activates transcription from class II MHC promoters. Recognizes X-boxes. Mediates cooperative binding between RFX and NF-Y. RFX binds the X1 box of MHC-II promoters. This chain is DNA-binding protein Rfx5 (Rfx5), found in Mus musculus (Mouse).